The primary structure comprises 257 residues: METRVKKLRILLSNDDGVFAEGINTLARVLADIADITIVAPDRNRSGASNSLTLESPLRVRQIDEHIHSVQGTPTDCVHFALNELMKDNLPDLIIAGINHGANLGDDTLYSGTVAAATEGHFLGLPAIAISLVGREHFDTAAQVALKIVKNHLVSPLTTQKVLNVNVPDCEYEQLMGWEVTRLGARHHAESMIKDTDPRGETIYWLGPPGKKQDAGEGTDFFVVKQHRVSITPLQVDLTAHDSLGMITDWLSLESSK.

4 residues coordinate a divalent metal cation: Asp-15, Asp-16, Ser-46, and Asn-99.

The protein belongs to the SurE nucleotidase family. A divalent metal cation serves as cofactor.

It is found in the cytoplasm. The enzyme catalyses a ribonucleoside 5'-phosphate + H2O = a ribonucleoside + phosphate. In terms of biological role, nucleotidase that shows phosphatase activity on nucleoside 5'-monophosphates. In Aliivibrio fischeri (strain ATCC 700601 / ES114) (Vibrio fischeri), this protein is 5'-nucleotidase SurE.